The sequence spans 166 residues: Ribosome maturation factor RimP (166 aa).

The protein belongs to the RimP family.

The protein localises to the cytoplasm. Functionally, required for maturation of 30S ribosomal subunits. This chain is Ribosome maturation factor RimP, found in Psychrobacter arcticus (strain DSM 17307 / VKM B-2377 / 273-4).